A 301-amino-acid polypeptide reads, in one-letter code: tRNA pseudouridine synthase B (301 aa).

The active-site Nucleophile is aspartate 47.

It belongs to the pseudouridine synthase TruB family. Type 1 subfamily.

The enzyme catalyses uridine(55) in tRNA = pseudouridine(55) in tRNA. Functionally, responsible for synthesis of pseudouridine from uracil-55 in the psi GC loop of transfer RNAs. This Cereibacter sphaeroides (strain ATCC 17025 / ATH 2.4.3) (Rhodobacter sphaeroides) protein is tRNA pseudouridine synthase B.